The chain runs to 75 residues: UPF0352 protein ETA_12580 (75 aa).

It belongs to the UPF0352 family.

The protein is UPF0352 protein ETA_12580 of Erwinia tasmaniensis (strain DSM 17950 / CFBP 7177 / CIP 109463 / NCPPB 4357 / Et1/99).